We begin with the raw amino-acid sequence, 228 residues long: UPF0173 metal-dependent hydrolase PTH_1415 (228 aa).

The protein belongs to the UPF0173 family.

The chain is UPF0173 metal-dependent hydrolase PTH_1415 from Pelotomaculum thermopropionicum (strain DSM 13744 / JCM 10971 / SI).